Here is a 258-residue protein sequence, read N- to C-terminus: Imidazole glycerol phosphate synthase subunit HisF (258 aa).

Catalysis depends on residues aspartate 11 and aspartate 130.

This sequence belongs to the HisA/HisF family. Heterodimer of HisH and HisF.

It localises to the cytoplasm. It carries out the reaction 5-[(5-phospho-1-deoxy-D-ribulos-1-ylimino)methylamino]-1-(5-phospho-beta-D-ribosyl)imidazole-4-carboxamide + L-glutamine = D-erythro-1-(imidazol-4-yl)glycerol 3-phosphate + 5-amino-1-(5-phospho-beta-D-ribosyl)imidazole-4-carboxamide + L-glutamate + H(+). Its pathway is amino-acid biosynthesis; L-histidine biosynthesis; L-histidine from 5-phospho-alpha-D-ribose 1-diphosphate: step 5/9. Functionally, IGPS catalyzes the conversion of PRFAR and glutamine to IGP, AICAR and glutamate. The HisF subunit catalyzes the cyclization activity that produces IGP and AICAR from PRFAR using the ammonia provided by the HisH subunit. This chain is Imidazole glycerol phosphate synthase subunit HisF, found in Rhodopseudomonas palustris (strain BisB18).